A 99-amino-acid chain; its full sequence is MSWYRWDGEDLILACHLQPKASKDEFAGLHGERLKIRLTAPPVEGKANAHLLAFLAGVFGVPKSQVSLESGESNRQKRVRIRRPRQLPALPGLAPRPDA.

The disordered stretch occupies residues 66-99 (VSLESGESNRQKRVRIRRPRQLPALPGLAPRPDA). Residues 76 to 85 (QKRVRIRRPR) show a composition bias toward basic residues.

Belongs to the UPF0235 family.

The polypeptide is UPF0235 protein Avin_03050 (Azotobacter vinelandii (strain DJ / ATCC BAA-1303)).